A 468-amino-acid chain; its full sequence is ATP synthase subunit beta (468 aa).

Residue 155–162 coordinates ATP; it reads GGAGVGKT.

It belongs to the ATPase alpha/beta chains family. As to quaternary structure, F-type ATPases have 2 components, CF(1) - the catalytic core - and CF(0) - the membrane proton channel. CF(1) has five subunits: alpha(3), beta(3), gamma(1), delta(1), epsilon(1). CF(0) has three main subunits: a(1), b(2) and c(9-12). The alpha and beta chains form an alternating ring which encloses part of the gamma chain. CF(1) is attached to CF(0) by a central stalk formed by the gamma and epsilon chains, while a peripheral stalk is formed by the delta and b chains.

Its subcellular location is the cell membrane. The enzyme catalyses ATP + H2O + 4 H(+)(in) = ADP + phosphate + 5 H(+)(out). Its function is as follows. Produces ATP from ADP in the presence of a proton gradient across the membrane. The catalytic sites are hosted primarily by the beta subunits. This chain is ATP synthase subunit beta, found in Streptococcus pyogenes serotype M6 (strain ATCC BAA-946 / MGAS10394).